Consider the following 331-residue polypeptide: tRNA N6-adenosine threonylcarbamoyltransferase (331 aa).

Fe cation contacts are provided by H108 and H112. Substrate contacts are provided by residues 129–133 (LVSGG), D161, E178, and S258. D286 provides a ligand contact to Fe cation.

Belongs to the KAE1 / TsaD family. Fe(2+) is required as a cofactor.

The protein localises to the cytoplasm. The enzyme catalyses L-threonylcarbamoyladenylate + adenosine(37) in tRNA = N(6)-L-threonylcarbamoyladenosine(37) in tRNA + AMP + H(+). Required for the formation of a threonylcarbamoyl group on adenosine at position 37 (t(6)A37) in tRNAs that read codons beginning with adenine. Is probably involved in the transfer of the threonylcarbamoyl moiety of threonylcarbamoyl-AMP (TC-AMP) to the N6 group of A37. The sequence is that of tRNA N6-adenosine threonylcarbamoyltransferase from Caldivirga maquilingensis (strain ATCC 700844 / DSM 13496 / JCM 10307 / IC-167).